A 123-amino-acid polypeptide reads, in one-letter code: Prostate stem cell antigen (123 aa).

Positions 1–20 (MKTVFFLLLATYLALHPGAA) are cleaved as a signal peptide. The region spanning 21–95 (LQCYSCTAQM…CCYSDLCNVN (75 aa)) is the UPAR/Ly6 domain. Cystine bridges form between Cys23–Cys48, Cys26–Cys35, Cys41–Cys66, Cys70–Cys86, and Cys87–Cys92. Asn40 carries an N-linked (GlcNAc...) asparagine glycan. Asn95 carries GPI-anchor amidated asparagine lipidation. A propeptide spans 96–123 (GAHTLKPPTTLGLLTVLCSLLLWGSSRL) (removed in mature form).

Interacts with CHRNA4. Predominantly expressed in prostate. Also found in spleen, liver, lung, prostate, kidney and testis. Expressed in brain cortex; expression is increased in transgenic mouse model of Alzheimer disease (at protein level).

It is found in the cell membrane. May be involved in the regulation of cell proliferation. In terms of biological role, may act as a modulator of nicotinic acetylcholine receptors (nAChRs) activity. In vitro inhibits nicotine-induced signaling probably implicating alpha-3:beta-2- or alpha-7-containing nAChRs. This chain is Prostate stem cell antigen (Psca), found in Mus musculus (Mouse).